Reading from the N-terminus, the 460-residue chain is A-type ATP synthase subunit B (460 aa).

The protein belongs to the ATPase alpha/beta chains family. Has multiple subunits with at least A(3), B(3), C, D, E, F, H, I and proteolipid K(x).

It localises to the cell membrane. In terms of biological role, component of the A-type ATP synthase that produces ATP from ADP in the presence of a proton gradient across the membrane. The B chain is a regulatory subunit. The chain is A-type ATP synthase subunit B from Thermoplasma volcanium (strain ATCC 51530 / DSM 4299 / JCM 9571 / NBRC 15438 / GSS1).